The primary structure comprises 222 residues: MKSHYIVLALASLTFLLCLPVSQSCNKALCASDVSKCLIQELCQCRPGEGNCPCCKECMLCLGALWDECCDCVGMCNPRNYSDTPPTSKSTVEELHEPIPSLFRALTEGDTQLNWNIVSFPVAEELSHHENLVSFLETVNQLHHQNVSVPSNNVHAPFPSDKERMCTVVYFDDCMSIHQCKISCESMGASKYRWFHNACCECIGPECIDYGSKTVKCMNCMF.

A signal peptide spans 1–24 (MKSHYIVLALASLTFLLCLPVSQS). 2 N-linked (GlcNAc...) asparagine glycosylation sites follow: Asn80 and Asn146.

This sequence belongs to the twisted gastrulation protein family. Interacts with CHRD and/or BMP4. This interaction enhances CHRD/BMP4 complex formation. Interacts with BMP7. In terms of tissue distribution, expressed in lymph node, liver, kidney, and lung. Expression in the kidney was stronger in the medulla than in the cortex, particularly in the cells surrounding the medullary tubules. Expressed in growth plate cartilage of long bones, ribs, and digits and to a lesser extent also in the resting zone of the epiphysis, trabecular bone, and vertebral cartilage. Expression seems to be absent from other skeletal tissues including muscle, skin, and fibroblasts.

Its subcellular location is the secreted. May be involved in dorsoventral axis formation. Seems to antagonize BMP signaling by forming ternary complexes with CHRD and BMPs, thereby preventing BMPs from binding to their receptors. In addition to the anti-BMP function, also has pro-BMP activity, partly mediated by cleavage and degradation of CHRD, which releases BMPs from ternary complexes. May be an important modulator of BMP-regulated cartilage development and chondrocyte differentiation. May play a role in thymocyte development. This chain is Twisted gastrulation protein homolog 1 (Twsg1), found in Mus musculus (Mouse).